The primary structure comprises 409 residues: Tyrosine--tRNA ligase (409 aa).

Tyr-39 is an L-tyrosine binding site. The short motif at Pro-44–Ser-53 is the 'HIGH' region element. L-tyrosine contacts are provided by Tyr-176 and Gln-180. Positions Lys-236 to Thr-240 match the 'KMSKS' region motif. Lys-239 contacts ATP. The region spanning Ile-346 to Ala-408 is the S4 RNA-binding domain.

This sequence belongs to the class-I aminoacyl-tRNA synthetase family. TyrS type 1 subfamily. As to quaternary structure, homodimer.

The protein localises to the cytoplasm. The enzyme catalyses tRNA(Tyr) + L-tyrosine + ATP = L-tyrosyl-tRNA(Tyr) + AMP + diphosphate + H(+). Functionally, catalyzes the attachment of tyrosine to tRNA(Tyr) in a two-step reaction: tyrosine is first activated by ATP to form Tyr-AMP and then transferred to the acceptor end of tRNA(Tyr). The polypeptide is Tyrosine--tRNA ligase (Zymomonas mobilis subsp. mobilis (strain ATCC 31821 / ZM4 / CP4)).